Consider the following 430-residue polypeptide: Mucorpepsin (430 aa).

Positions 1–22 (MLFSQITSAILLTAASLSLTTA) are cleaved as a signal peptide. The propeptide at 23–69 (RPVSKQSESKDKLLALPLTSVSRKFSQTKFGQQQLAEKLAGLKPFSE) is activation peptide. Positions 89 to 421 (YAIPVSIGTP…DFGNNRIGFA (333 aa)) constitute a Peptidase A1 domain. Residue D107 is part of the active site. C120 and C126 are oxidised to a cystine. N148 and N257 each carry an N-linked (GlcNAc...) asparagine glycan. Residue D306 is part of the active site. Residues C341 and C385 are joined by a disulfide bond.

Belongs to the peptidase A1 family.

It carries out the reaction Hydrolysis of proteins, favoring hydrophobic residues at P1 and P1'. Clots milk. Does not accept Lys at P1, and hence does not activate trypsinogen.. Functionally, this enzyme, capable of clotting milk is frequently used for cheese production. The chain is Mucorpepsin from Rhizomucor miehei.